The following is a 329-amino-acid chain: Probable ABC transporter permease protein MG188 homolog (329 aa).

The next 6 helical transmembrane spans lie at 30–50, 96–116, 128–148, 176–196, 234–254, and 283–303; these read FLLF…PFFL, IISL…IVFV, VFFL…IYIL, ALWG…VLVI, LIFL…ISLF, and NFAG…GLVL. The ABC transmembrane type-1 domain occupies 88-303; it reads LRNSFLYSII…ILGVCYGLVL (216 aa).

The protein belongs to the binding-protein-dependent transport system permease family. MalFG subfamily.

The protein localises to the cell membrane. Probably part of a binding-protein-dependent transport system. Probably responsible for the translocation of the substrate across the membrane. This is Probable ABC transporter permease protein MG188 homolog from Mycoplasma pneumoniae (strain ATCC 29342 / M129 / Subtype 1) (Mycoplasmoides pneumoniae).